The sequence spans 249 residues: Triosephosphate isomerase (249 aa).

Residues Asn-12 and Lys-14 each coordinate substrate. At Lys-14 the chain carries N6-acetyllysine. A 3'-nitrotyrosine modification is found at Tyr-68. Ser-80 carries the phosphoserine modification. The Electrophile role is filled by His-96. Ser-106 bears the Phosphoserine mark. Lys-142 participates in a covalent cross-link: Glycyl lysine isopeptide (Lys-Gly) (interchain with G-Cter in SUMO1). At Lys-149 the chain carries N6-succinyllysine. Residue Lys-156 is modified to N6-acetyllysine; alternate. The residue at position 156 (Lys-156) is an N6-succinyllysine; alternate. The active-site Proton acceptor is the Glu-166. Residue Thr-173 is modified to Phosphothreonine. An N6-acetyllysine; alternate modification is found at Lys-194. The residue at position 194 (Lys-194) is an N6-succinyllysine; alternate. Lys-194 bears the N6-methyllysine; alternate mark. Ser-198 carries the phosphoserine modification. Tyr-209 bears the 3'-nitrotyrosine mark. Residue Ser-212 is modified to Phosphoserine. The residue at position 214 (Thr-214) is a Phosphothreonine. Phosphoserine is present on Ser-223. Lys-238 is subject to N6-acetyllysine.

The protein belongs to the triosephosphate isomerase family. As to quaternary structure, homodimer.

The protein localises to the cytoplasm. It carries out the reaction dihydroxyacetone phosphate = methylglyoxal + phosphate. The enzyme catalyses D-glyceraldehyde 3-phosphate = dihydroxyacetone phosphate. The protein operates within carbohydrate degradation; glycolysis; D-glyceraldehyde 3-phosphate from glycerone phosphate: step 1/1. It participates in carbohydrate biosynthesis; gluconeogenesis. Its function is as follows. Triosephosphate isomerase is an extremely efficient metabolic enzyme that catalyzes the interconversion between dihydroxyacetone phosphate (DHAP) and D-glyceraldehyde-3-phosphate (G3P) in glycolysis and gluconeogenesis. Functionally, it is also responsible for the non-negligible production of methylglyoxal a reactive cytotoxic side-product that modifies and can alter proteins, DNA and lipids. The sequence is that of Triosephosphate isomerase (Tpi1) from Rattus norvegicus (Rat).